A 54-amino-acid chain; its full sequence is 2-aminomuconate deaminase (54 aa).

As to quaternary structure, homohexamer.

The catalysed reaction is (2Z,4E)-2-aminomuconate + H2O = (3E)-2-oxohex-3-enedioate + NH4(+). The protein operates within xenobiotic degradation; nitrobenzene degradation. Its function is as follows. Converts 2-aminomuconate to 4-oxalocrotonate, an intermediate step in the biodegradation of nitrobenzene. The chain is 2-aminomuconate deaminase from Ectopseudomonas oleovorans (Pseudomonas oleovorans).